The following is a 214-amino-acid chain: Small ribosomal subunit protein uS5 (214 aa).

Positions 54-117 constitute an S5 DRBM domain; it reads LKYEVVDIKV…RDAKMNILPV (64 aa).

The protein belongs to the universal ribosomal protein uS5 family. In terms of assembly, part of the 30S ribosomal subunit. Contacts protein S4.

Its function is as follows. With S4 and S12 plays an important role in translational accuracy. This chain is Small ribosomal subunit protein uS5, found in Saccharolobus islandicus (strain Y.N.15.51 / Yellowstone #2) (Sulfolobus islandicus).